The primary structure comprises 558 residues: V-set and immunoglobulin domain-containing protein 10 (558 aa).

The signal sequence occupies residues 1 to 20 (MAGLRVLLCLGALLARQGSA). Residues 21–426 (GLQLLLNPSR…IWLSVKEPLN (406 aa)) are Extracellular-facing. N-linked (GlcNAc...) asparagine glycosylation is found at asparagine 32, asparagine 60, asparagine 121, asparagine 150, asparagine 159, and asparagine 218. Ig-like C2-type domains lie at 37-140 (PNSE…RLRV), 144-235 (PAYV…RKVT), 248-327 (PQCS…VKLS), and 332-420 (PSQP…IWLS). Cysteine 65 and cysteine 124 form a disulfide bridge. Intrachain disulfides connect cysteine 174-cysteine 221 and cysteine 265-cysteine 308. Asparagine 344 is a glycosylation site (N-linked (GlcNAc...) asparagine). Residues cysteine 349 and cysteine 404 are joined by a disulfide bond. Residues 427–447 (IGGIVGTVVSLLLLGLAVVSG) traverse the membrane as a helical segment. Residues 448-558 (LTLYYSPAFW…GIVQEDGKPV (111 aa)) are Cytoplasmic-facing. Positions 477–506 (DSEEEEEEEEEEEEKEDVAEEVEQETNETE) are enriched in acidic residues. Disordered regions lie at residues 477-515 (DSEEEEEEEEEEEEKEDVAEEVEQETNETEELPKGISKH) and 532-558 (MGNGFQEFQDDSDGQQSGIVQEDGKPV).

The protein localises to the membrane. The chain is V-set and immunoglobulin domain-containing protein 10 (Vsig10) from Mus musculus (Mouse).